The following is a 217-amino-acid chain: Adenylate kinase (217 aa).

10–15 contributes to the ATP binding site; that stretch reads GIGKGT. The interval 30–59 is NMP; sequence ATGDIFRKNFQENTPLGKESKKFINKGLLV. AMP-binding positions include T31, R36, 57 to 59, 85 to 88, and Q92; these read LLV and GFPR. Positions 126–163 are LID; that stretch reads GRRICSHCGKVYHLDNLPPKIEGICDKDQKKLIQREDD. R127 lines the ATP pocket. 2 residues coordinate Zn(2+): C130 and C133. 136–137 is a binding site for ATP; it reads VY. Residues C150 and D153 each contribute to the Zn(2+) site. Residues R160 and R171 each contribute to the AMP site. Q199 lines the ATP pocket.

The protein belongs to the adenylate kinase family. In terms of assembly, monomer.

The protein resides in the cytoplasm. It catalyses the reaction AMP + ATP = 2 ADP. The protein operates within purine metabolism; AMP biosynthesis via salvage pathway; AMP from ADP: step 1/1. Functionally, catalyzes the reversible transfer of the terminal phosphate group between ATP and AMP. Plays an important role in cellular energy homeostasis and in adenine nucleotide metabolism. This Phytoplasma australiense protein is Adenylate kinase.